The primary structure comprises 167 residues: Homing endonuclease I-ApeII (167 aa).

The protein belongs to the LAGLIDADG endonuclease family.

Functionally, endonuclease involved in rRNA intron I-gamma homing. The polypeptide is Homing endonuclease I-ApeII (apeII) (Aeropyrum pernix (strain ATCC 700893 / DSM 11879 / JCM 9820 / NBRC 100138 / K1)).